The chain runs to 265 residues: Probable cell division protein kinase ECU08_0230 (265 aa).

The Protein kinase domain maps to 4–263 (YILGALIGSG…IMEILENEYG (260 aa)). ATP-binding positions include 10–18 (IGSGTYGEV) and Lys-33. Asp-121 serves as the catalytic Proton acceptor.

Belongs to the protein kinase superfamily. CMGC Ser/Thr protein kinase family. CDC2/CDKX subfamily.

The protein resides in the nucleus. The catalysed reaction is L-seryl-[protein] + ATP = O-phospho-L-seryl-[protein] + ADP + H(+). It carries out the reaction L-threonyl-[protein] + ATP = O-phospho-L-threonyl-[protein] + ADP + H(+). May play a role in the control of the eukaryotic cell cycle. This is Probable cell division protein kinase ECU08_0230 from Encephalitozoon cuniculi (strain GB-M1) (Microsporidian parasite).